Reading from the N-terminus, the 65-residue chain is Large ribosomal subunit protein bL35 (65 aa).

This sequence belongs to the bacterial ribosomal protein bL35 family.

In Clostridium acetobutylicum (strain ATCC 824 / DSM 792 / JCM 1419 / IAM 19013 / LMG 5710 / NBRC 13948 / NRRL B-527 / VKM B-1787 / 2291 / W), this protein is Large ribosomal subunit protein bL35.